We begin with the raw amino-acid sequence, 1321 residues long: Multidrug resistance protein pgp-1 (1321 aa).

At 1 to 77 the chain is on the cytoplasmic side; sequence MLRNGSLRQS…YTTTLEKLLL (77 aa). The region spanning 77-381 is the ABC transmembrane type-1 1 domain; sequence LFIGTLVAVI…AGPQLAVLGT (305 aa). Residues 78-98 traverse the membrane as a helical segment; sequence FIGTLVAVITGAGLPLMSILQ. 2 N-linked (GlcNAc...) asparagine glycosylation sites follow: Asn115 and Asn125. Residues 144 to 164 form a helical membrane-spanning segment; sequence AMTVGMWAAGQITVTCYLYVA. A glycan (N-linked (GlcNAc...) asparagine) is linked at Asn190. Transmembrane regions (helical) follow at residues 213–233, 240–260, 321–341, and 350–370; these read KIGMAFQYLSQFITGFIVAFT, LVMLAVTPIQALCGFAIAKSM, ISFGAMQASNFISFALAFYIG, and LNFGDMLTTFSSVMMGSMALG. Residues 371–753 are Cytoplasmic-facing; the sequence is LAGPQLAVLG…LYHARPHALS (383 aa). Residues 416–652 enclose the ABC transporter 1 domain; sequence ITVENVHFTY…QGLYYDLVTA (237 aa). Position 451–458 (451–458) interacts with ATP; that stretch reads GSSGCGKS. 2 consecutive transmembrane segments (helical) span residues 754–774 and 798–818; these read LFIGMSTATIGGFIYPTYSVF and LMFLVLAAAQGICSFLMTFFM. The 290-residue stretch at 754 to 1043 folds into the ABC transmembrane type-1 2 domain; the sequence is LFIGMSTATI…ATSYFPEYAK (290 aa). Asn850 carries N-linked (GlcNAc...) asparagine glycosylation. Transmembrane regions (helical) follow at residues 874–894, 895–915, 978–998, and 1017–1037; these read FSTVITTLVSMVAGIGLAFFY, GWQMALLIIAILPIVAFGQYL, IQGLSYGCASSVLYLLNTCAY, and VLRVMYAITISTSTLGFATSY. Residues 1038-1321 lie on the Cytoplasmic side of the membrane; sequence FPEYAKATFA…LTQKQMTEKK (284 aa). The ABC transporter 2 domain maps to 1077–1315; sequence VIFKNVRFAY…KGAYYKLTQK (239 aa). Position 1112–1119 (1112–1119) interacts with ATP; that stretch reads GPSGCGKS.

Belongs to the ABC transporter superfamily. ABCB family. Multidrug resistance exporter (TC 3.A.1.201) subfamily. As to expression, intestinal cells.

The protein localises to the membrane. The enzyme catalyses ATP + H2O + xenobioticSide 1 = ADP + phosphate + xenobioticSide 2.. Its function is as follows. Energy-dependent efflux pump responsible for decreased drug accumulation in multidrug-resistant cells. This chain is Multidrug resistance protein pgp-1 (pgp-1), found in Caenorhabditis elegans.